The primary structure comprises 398 residues: Succinate--CoA ligase [ADP-forming] subunit beta (398 aa).

Residues 9–254 (KALLGEFGVP…ETEEDAKEIE (246 aa)) enclose the ATP-grasp domain. ATP contacts are provided by residues Lys46, 53–55 (GRG), Glu109, Ser112, and Glu117. Mg(2+)-binding residues include Asn209 and Asp223. Residues Asn274 and 331–333 (GIM) each bind substrate.

It belongs to the succinate/malate CoA ligase beta subunit family. In terms of assembly, heterotetramer of two alpha and two beta subunits. Requires Mg(2+) as cofactor.

It carries out the reaction succinate + ATP + CoA = succinyl-CoA + ADP + phosphate. It catalyses the reaction GTP + succinate + CoA = succinyl-CoA + GDP + phosphate. It participates in carbohydrate metabolism; tricarboxylic acid cycle; succinate from succinyl-CoA (ligase route): step 1/1. Its function is as follows. Succinyl-CoA synthetase functions in the citric acid cycle (TCA), coupling the hydrolysis of succinyl-CoA to the synthesis of either ATP or GTP and thus represents the only step of substrate-level phosphorylation in the TCA. The beta subunit provides nucleotide specificity of the enzyme and binds the substrate succinate, while the binding sites for coenzyme A and phosphate are found in the alpha subunit. The protein is Succinate--CoA ligase [ADP-forming] subunit beta of Bradyrhizobium diazoefficiens (strain JCM 10833 / BCRC 13528 / IAM 13628 / NBRC 14792 / USDA 110).